The chain runs to 201 residues: Small ribosomal subunit protein uS4 (201 aa).

The disordered stretch occupies residues 1–46 (MARYTGPRSRISRRFGEPVMGDSKALQKKNYAPGMHGRNKKRKQSE). The S4 RNA-binding domain occupies 92 to 151 (ARLDNTVYRLGIASSRRAARQLVIHKHIVVNGDVVNIPSYQLKPGDQLGVREKSKSIEAI).

Belongs to the universal ribosomal protein uS4 family. As to quaternary structure, part of the 30S ribosomal subunit. Contacts protein S5. The interaction surface between S4 and S5 is involved in control of translational fidelity.

In terms of biological role, one of the primary rRNA binding proteins, it binds directly to 16S rRNA where it nucleates assembly of the body of the 30S subunit. Its function is as follows. With S5 and S12 plays an important role in translational accuracy. The sequence is that of Small ribosomal subunit protein uS4 from Cytophaga hutchinsonii (strain ATCC 33406 / DSM 1761 / CIP 103989 / NBRC 15051 / NCIMB 9469 / D465).